A 426-amino-acid polypeptide reads, in one-letter code: Serine--tRNA ligase (426 aa).

An L-serine-binding site is contributed by 233–235; it reads TAE. ATP is bound at residue 264–266; it reads RSE. Residue glutamate 287 participates in L-serine binding. 351-354 serves as a coordination point for ATP; sequence EISS. L-serine is bound at residue serine 387.

Belongs to the class-II aminoacyl-tRNA synthetase family. Type-1 seryl-tRNA synthetase subfamily. Homodimer. The tRNA molecule binds across the dimer.

The protein localises to the cytoplasm. It catalyses the reaction tRNA(Ser) + L-serine + ATP = L-seryl-tRNA(Ser) + AMP + diphosphate + H(+). The enzyme catalyses tRNA(Sec) + L-serine + ATP = L-seryl-tRNA(Sec) + AMP + diphosphate + H(+). It functions in the pathway aminoacyl-tRNA biosynthesis; selenocysteinyl-tRNA(Sec) biosynthesis; L-seryl-tRNA(Sec) from L-serine and tRNA(Sec): step 1/1. Functionally, catalyzes the attachment of serine to tRNA(Ser). Is also able to aminoacylate tRNA(Sec) with serine, to form the misacylated tRNA L-seryl-tRNA(Sec), which will be further converted into selenocysteinyl-tRNA(Sec). The protein is Serine--tRNA ligase of Stutzerimonas stutzeri (strain A1501) (Pseudomonas stutzeri).